Here is a 173-residue protein sequence, read N- to C-terminus: Photosystem I assembly protein Ycf3 (173 aa).

3 TPR repeats span residues 35–68 (AYLY…EDNQ), 72–105 (GETL…NPKQ), and 120–153 (GRMA…YPGG).

It belongs to the Ycf3 family.

The protein localises to the cellular thylakoid membrane. Essential for the assembly of the photosystem I (PSI) complex. May act as a chaperone-like factor to guide the assembly of the PSI subunits. This Prochlorococcus marinus (strain NATL1A) protein is Photosystem I assembly protein Ycf3.